An 829-amino-acid chain; its full sequence is Sodium/hydrogen exchanger 3 (829 aa).

The N-terminal stretch at 1-26 is a signal peptide; that stretch reads MWHRALGPGWKLLLALALTSLQGARG. The Extracellular portion of the chain corresponds to 27-46; it reads AEEEPSSDGSFQVVTFKWHH. Residues 47–69 form a helical membrane-spanning segment; that stretch reads VQDPYIIALWILVASLAKIVFHL. The Cytoplasmic portion of the chain corresponds to 70-77; it reads SHKVTSIV. Residues 78–97 traverse the membrane as a helical segment; that stretch reads PESALLIVLGLVLGGIVWAA. Residues 98–106 are Extracellular-facing; it reads DHIASFTLT. Residues 107 to 124 form a helical membrane-spanning segment; it reads PTLFFFYLLPPIVLDAGY. At 125–127 the chain is on the cytoplasmic side; the sequence is FMP. Residues 128–163 form a helical membrane-spanning segment; that stretch reads NRLFFGNLGTILLYAVIGTIWNAATTGLSLYGVFLS. 3 residues coordinate a 1,2-diacyl-sn-glycero-3-phospho-(1D-myo-inositol): glycine 133, glycine 136, and threonine 137. The Extracellular portion of the chain corresponds to 164–176; the sequence is GLMGELKIGLLDF. Residues 177–198 traverse the membrane as a helical segment; that stretch reads LLFGSLIAAVDPVAVLAVFEEV. Residues 199 to 200 are Cytoplasmic-facing; that stretch reads HV. Residues 201-232 traverse the membrane as a helical segment; the sequence is NEVLFIIVFGESLLNDAVTVVLYNVFESFVTL. The Extracellular segment spans residues 233–239; it reads GGDAVTG. The helical transmembrane segment at 240 to 274 threads the bilayer; sequence VDCVKGIVSFFVVSLGGTLVGVIFAFLLSLVTRFT. Residues 275-276 are Cytoplasmic-facing; it reads KH. Residues 277–299 traverse the membrane as a helical segment; sequence VRIIEPGFVFVISYLSYLTSEML. Over 300–301 the chain is Extracellular; sequence SL. The helical transmembrane segment at 302-318 threads the bilayer; sequence SSILAITFCGICCQKYV. Topologically, residues 319-325 are cytoplasmic; sequence KANISEQ. Residues 326-354 form a helical membrane-spanning segment; it reads SATTVRYTMKMLASGAETIIFMFLGISAV. Residues 355–362 lie on the Extracellular side of the membrane; sequence NPDIWTWN. A helical membrane pass occupies residues 363–384; sequence TAFVLLTLVFISVYRAIGVVLQ. The Cytoplasmic segment spans residues 385–397; the sequence is TWILNRYRMVQLE. Methionine 393 is an a 1,2-diacyl-sn-glycero-3-phospho-(1D-myo-inositol) binding site. The chain crosses the membrane as a helical span at residues 398–421; that stretch reads TIDQVVMSYGGLRGAVAYALVVLL. Over 422-428 the chain is Extracellular; the sequence is DEKKVKE. Residues 429 to 462 form a helical membrane-spanning segment; it reads KNLFVSTTLIVVFFTVIFQGLTIKPLVQWLKVKR. Topologically, residues 463–829 are cytoplasmic; that stretch reads SEHREPKLNE…QPAAPESTHM (367 aa). Positions 492, 493, and 495 each coordinate a 1,2-diacyl-sn-glycero-3-phospho-(1D-myo-inositol). Phosphoserine is present on residues serine 550 and serine 558. The tract at residues 571 to 585 is interaction with EZR; sequence RPSTVEASVSYFLRE. An interaction with NHERF4 region spans residues 586–663; the sequence is NVSAVCLDMQ…RKRLESFKSA (78 aa). The segment at 587–691 is interaction with AHCYL1; that stretch reads VSAVCLDMQS…AQKRRNSSIP (105 aa). 2 positions are modified to phosphoserine: serine 588 and serine 603. Residue serine 659 is modified to Phosphoserine; by SGK1. Residues 677–687 are compositionally biased toward basic residues; the sequence is YKRERAQKRRN. A disordered region spans residues 677–696; the sequence is YKRERAQKRRNSSIPNGKLP. Residues serine 714, serine 805, and serine 808 each carry the phosphoserine modification.

It belongs to the monovalent cation:proton antiporter 1 (CPA1) transporter (TC 2.A.36) family. Homodimer. Found in the forms of complex and dynamic macromolecular complexes. Binds NHERF1 and NHERF2. Interacts with CHP1; this interaction increases trafficking and activity of SLC9A3 at the plasma membrane. Interacts with CHP2 and SHANK2. Interacts with PDZK1 (via C-terminal PDZ domain). Interacts with NHERF4 and interactions decrease in response to elevated calcium ion levels. Interacts with AHCYL1; the interaction is required for SLC9A3 activity. Interacts with EZR; interaction targets SLC9A3 to the apical membrane. Interacts with SNX27 (via PDZ domains); directs SLC9A3 membrane insertion from early endosomes to the plasma membrane. Phosphorylated by PKA, which inhibits activity. Phosphorylation at Ser-659 by SGK1 is associated with increased abundance at the cell membrane. Phosphorylation at Ser-714 by CSNK2A1 regulates SLC9A3 activity through the formation of multiple signaling complexes.

It localises to the apical cell membrane. Its subcellular location is the cell membrane. The protein resides in the recycling endosome membrane. It is found in the early endosome membrane. It carries out the reaction Na(+)(in) + H(+)(out) = Na(+)(out) + H(+)(in). Seems to switch between active and inactive modes in response to various stimuli. Activated directly or indirectly by membrane phosphatidylinositol (PIs). Regulated by a variety of auxiliary proteins, which facilitate the maturation, cell surface expression and function of the transporter. Inhibited specifically by the drug tenapanor. Functionally, plasma membrane Na(+)/H(+) antiporter. Exchanges intracellular H(+) ions for extracellular Na(+) in 1:1 stoichiometry, playing a key role in salt and fluid absorption and pH homeostasis. Major apical Na(+)/H(+) exchanger in kidney and intestine playing an important role in renal and intestine Na(+) absorption and blood pressure regulation. The protein is Sodium/hydrogen exchanger 3 of Mus musculus (Mouse).